A 259-amino-acid chain; its full sequence is Trans-aconitate 2-methyltransferase (259 aa).

This sequence belongs to the methyltransferase superfamily. Tam family.

The protein localises to the cytoplasm. It carries out the reaction trans-aconitate + S-adenosyl-L-methionine = (E)-3-(methoxycarbonyl)pent-2-enedioate + S-adenosyl-L-homocysteine. Functionally, catalyzes the S-adenosylmethionine monomethyl esterification of trans-aconitate. The sequence is that of Trans-aconitate 2-methyltransferase from Variovorax paradoxus (strain S110).